A 330-amino-acid chain; its full sequence is Cyclin N-terminal domain-containing protein 1 (330 aa).

Residues 27–178 form the Cyclin N-terminal domain; sequence DALLHLAQQN…VLKSLNFRIN (152 aa).

As to quaternary structure, interacts with PRR19; this interaction promotes crossover formation. Interacts with RFC3 and RFC4; these interactions facilitate crossover formation. Interacts with CDC34; this interaction regulates the cell-cycle progression.

The protein resides in the nucleus. It is found in the cytoplasm. The protein localises to the chromosome. In terms of biological role, plays a role in the different steps of crossover formation during meiotic recombination. Participates in the crossover differentiation step of crossover-specific recombination intermediates through its interaction with PRR19. In addition, stimulates crossover formation through the interactions with RFC3 and RFC4 and simultaneously regulates cell-cycle progression through interactions with CDC34 and subsequent ubiquitination of WEE1. May also participates in an active deselection process that destabilizes or removes excess pre-CO intermediates. In Homo sapiens (Human), this protein is Cyclin N-terminal domain-containing protein 1.